Reading from the N-terminus, the 240-residue chain is Ribonuclease PH (240 aa).

Residues Arg-86 and 124–126 (GTR) contribute to the phosphate site.

It belongs to the RNase PH family. In terms of assembly, homohexameric ring arranged as a trimer of dimers.

It carries out the reaction tRNA(n+1) + phosphate = tRNA(n) + a ribonucleoside 5'-diphosphate. Its function is as follows. Phosphorolytic 3'-5' exoribonuclease that plays an important role in tRNA 3'-end maturation. Removes nucleotide residues following the 3'-CCA terminus of tRNAs; can also add nucleotides to the ends of RNA molecules by using nucleoside diphosphates as substrates, but this may not be physiologically important. Probably plays a role in initiation of 16S rRNA degradation (leading to ribosome degradation) during starvation. The chain is Ribonuclease PH from Mannheimia succiniciproducens (strain KCTC 0769BP / MBEL55E).